The following is a 369-amino-acid chain: DNA replication and repair protein RecF (369 aa).

30 to 37 provides a ligand contact to ATP; that stretch reads GDNGSGKT.

The protein belongs to the RecF family.

Its subcellular location is the cytoplasm. Its function is as follows. The RecF protein is involved in DNA metabolism; it is required for DNA replication and normal SOS inducibility. RecF binds preferentially to single-stranded, linear DNA. It also seems to bind ATP. In Pseudomonas aeruginosa (strain UCBPP-PA14), this protein is DNA replication and repair protein RecF.